The primary structure comprises 46 residues: Mu-segestritoxin-Sf1h (46 aa).

Disulfide bonds link Cys3/Cys19, Cys10/Cys22, Cys18/Cys42, and Cys24/Cys40. The segment at 31 to 33 (RPW) is keys region for toxin activity.

It belongs to the neurotoxin 16 (SFI) family. Expressed by the venom gland.

The protein resides in the secreted. Insecticidal toxin. It inhibits insect voltage-gated sodium channels (Nav) by partially blocking the channel pore in DUM neurons from the American cockroach, not by acting as a gating modifier. The inhibition is only partially reversible after prolonged washout. In vivo, the toxin causes flaccid paralysis followed by death when injected into Heliothis virescens larvae. It also causes uncoordinated movements followed by full paralysis to sheep blowflies (Lucilia cuprina). When the toxin is fused to snowdrop lectin, it is orally active against larvae of the tomato moth (Laconobia oleracea), the rice brown planthopper (Nilaparvata lugens), and the peach-potato aphid (Myzus persicae). The polypeptide is Mu-segestritoxin-Sf1h (Segestria florentina (Tube-web spider)).